The following is a 417-amino-acid chain: Histidine--tRNA ligase (417 aa).

It belongs to the class-II aminoacyl-tRNA synthetase family. In terms of assembly, homodimer.

It localises to the cytoplasm. The catalysed reaction is tRNA(His) + L-histidine + ATP = L-histidyl-tRNA(His) + AMP + diphosphate + H(+). The polypeptide is Histidine--tRNA ligase (Nitratidesulfovibrio vulgaris (strain DP4) (Desulfovibrio vulgaris)).